The following is a 326-amino-acid chain: NADH-specific methylglyoxal reductase (326 aa).

NAD(+) contacts are provided by residues 20–21 (TW) and D54. Y59 functions as the Proton donor in the catalytic mechanism. Residues Q189, 217-222 (YSPLEQ), G291, and Q297 contribute to the NAD(+) site.

Belongs to the aldo/keto reductase family. Aldo/keto reductase 11 subfamily. In terms of assembly, monomer.

It catalyses the reaction hydroxyacetone + NAD(+) = methylglyoxal + NADH + H(+). Catalyzes the NADH-dependent reduction of methylglyoxal (2-oxopropanal) in vitro. It is not known if this activity has physiological significance. Cannot use NADPH as a cosubstrate. Seems to play some role in intestinal colonization. The chain is NADH-specific methylglyoxal reductase (ydjG) from Escherichia coli (strain K12).